The sequence spans 450 residues: Probable ECA polymerase (450 aa).

11 consecutive transmembrane segments (helical) span residues 6 to 26 (FSGL…LTWF), 37 to 57 (VFFS…TSVL), 63 to 83 (VGVA…CFYA), 118 to 138 (VILM…NGFL), 155 to 175 (GVAL…VYFL), 181 to 201 (AWLF…MIVG), 207 to 227 (IIIA…ISLW), 228 to 248 (MLAA…LKRY), 341 to 361 (LVVM…GLII), 378 to 398 (YKAA…IVLA), and 410 to 430 (VFFI…YWLF).

It belongs to the WzyE family. Probably part of a complex composed of WzxE, WzyE and WzzE.

Its subcellular location is the cell inner membrane. It participates in bacterial outer membrane biogenesis; enterobacterial common antigen biosynthesis. In terms of biological role, probably involved in the polymerization of enterobacterial common antigen (ECA) trisaccharide repeat units. This is Probable ECA polymerase from Shigella flexneri.